The primary structure comprises 312 residues: Elongation factor Ts, mitochondrial (312 aa).

The protein belongs to the EF-Ts family.

It localises to the mitochondrion. In terms of biological role, associates with the EF-Tu.GDP complex and induces the exchange of GDP to GTP. It remains bound to the aminoacyl-tRNA.EF-Tu.GTP complex up to the GTP hydrolysis stage on the ribosome. The polypeptide is Elongation factor Ts, mitochondrial (tsfm) (Xenopus laevis (African clawed frog)).